The chain runs to 354 residues: DNA polymerase IV (354 aa).

The UmuC domain occupies 6–187 (IIHVDCDCFY…LPVARLHGVG (182 aa)). Mg(2+) is bound by residues D10 and D105. E106 is a catalytic residue.

It belongs to the DNA polymerase type-Y family. As to quaternary structure, monomer. The cofactor is Mg(2+).

It is found in the cytoplasm. The enzyme catalyses DNA(n) + a 2'-deoxyribonucleoside 5'-triphosphate = DNA(n+1) + diphosphate. Functionally, poorly processive, error-prone DNA polymerase involved in untargeted mutagenesis. Copies undamaged DNA at stalled replication forks, which arise in vivo from mismatched or misaligned primer ends. These misaligned primers can be extended by PolIV. Exhibits no 3'-5' exonuclease (proofreading) activity. May be involved in translesional synthesis, in conjunction with the beta clamp from PolIII. The chain is DNA polymerase IV from Pseudomonas putida (strain ATCC 47054 / DSM 6125 / CFBP 8728 / NCIMB 11950 / KT2440).